The chain runs to 300 residues: Dihydroorotate dehydrogenase B (NAD(+)), catalytic subunit (300 aa).

Residues serine 20 and 44-45 (KG) contribute to the FMN site. Residues lysine 44 and 68-72 (NAIGL) contribute to the substrate site. FMN is bound by residues asparagine 98 and asparagine 125. Asparagine 125 serves as a coordination point for substrate. Residue cysteine 128 is the Nucleophile of the active site. Lysine 163 and isoleucine 189 together coordinate FMN. 190–191 (NT) serves as a coordination point for substrate. Residues glycine 215, 241–242 (GG), and 263–264 (GT) contribute to the FMN site.

This sequence belongs to the dihydroorotate dehydrogenase family. Type 1 subfamily. In terms of assembly, heterotetramer of 2 PyrK and 2 PyrD type B subunits. The cofactor is FMN.

The protein localises to the cytoplasm. It carries out the reaction (S)-dihydroorotate + NAD(+) = orotate + NADH + H(+). It functions in the pathway pyrimidine metabolism; UMP biosynthesis via de novo pathway; orotate from (S)-dihydroorotate (NAD(+) route): step 1/1. Catalyzes the conversion of dihydroorotate to orotate with NAD(+) as electron acceptor. The polypeptide is Dihydroorotate dehydrogenase B (NAD(+)), catalytic subunit (pyrD) (Lachnoclostridium phytofermentans (strain ATCC 700394 / DSM 18823 / ISDg) (Clostridium phytofermentans)).